The chain runs to 122 residues: Large ribosomal subunit protein uL14 (122 aa).

This sequence belongs to the universal ribosomal protein uL14 family. Part of the 50S ribosomal subunit. Forms a cluster with proteins L3 and L19. In the 70S ribosome, L14 and L19 interact and together make contacts with the 16S rRNA in bridges B5 and B8.

Its function is as follows. Binds to 23S rRNA. Forms part of two intersubunit bridges in the 70S ribosome. In Acinetobacter baumannii (strain AB307-0294), this protein is Large ribosomal subunit protein uL14.